Here is a 197-residue protein sequence, read N- to C-terminus: MTTLQERVAAHFAESIRAKQEAGKVLVEPTVQAAELMLQCLMNDGKILACGNGGSAADAQHFAAEMTGRFEKERMELAAVALTTDTSALTAIGNDYGFNHVFSKQVRALGRAGDILVGISTSGNSANVIEAIKAAHERDMHVIALTGRDGGKIAAILKDTDVLLNVPHPRTARIQENHILLIHAICDCIDSVLLEGM.

Residues 37-197 (MLQCLMNDGK…CIDSVLLEGM (161 aa)) enclose the SIS domain. 52-54 (NGG) contributes to the substrate binding site. Zn(2+) is bound by residues H61 and E65. Substrate-binding positions include E65, 94–95 (ND), 120–122 (STS), S125, and Q175. Zn(2+) is bound by residues Q175 and H183.

The protein belongs to the SIS family. GmhA subfamily. In terms of assembly, homotetramer. The cofactor is Zn(2+).

The protein resides in the cytoplasm. The enzyme catalyses 2 D-sedoheptulose 7-phosphate = D-glycero-alpha-D-manno-heptose 7-phosphate + D-glycero-beta-D-manno-heptose 7-phosphate. It participates in carbohydrate biosynthesis; D-glycero-D-manno-heptose 7-phosphate biosynthesis; D-glycero-alpha-D-manno-heptose 7-phosphate and D-glycero-beta-D-manno-heptose 7-phosphate from sedoheptulose 7-phosphate: step 1/1. In terms of biological role, catalyzes the isomerization of sedoheptulose 7-phosphate in D-glycero-D-manno-heptose 7-phosphate. This chain is Phosphoheptose isomerase, found in Neisseria meningitidis serogroup C / serotype 2a (strain ATCC 700532 / DSM 15464 / FAM18).